A 467-amino-acid chain; its full sequence is Peroxisome proliferator-activated receptor alpha (467 aa).

The segment at residues 99–173 is a DNA-binding region (nuclear receptor); the sequence is NIECRICGDK…VGMSHNAIRF (75 aa). 2 consecutive NR C4-type zinc fingers follow at residues 102–122 and 139–161; these read CRICGDKASGYHYGVHACEGC and CDRSCKIQKKNRNKCQYCRFHKC. One can recognise an NR LBD domain in the interval 239–466; the sequence is FVIHDMETLC…PLLQEIYRDM (228 aa). A required for heterodimerization with RXRA region spans residues 304–433; the sequence is DQVTLLKYGV…PKLLQKLADL (130 aa).

Belongs to the nuclear hormone receptor family. NR1 subfamily. As to quaternary structure, heterodimer; with RXRA. This heterodimerization is required for DNA binding and transactivation activity. Interacts with NCOA3 coactivator. Interacts with CITED2; the interaction stimulates its transcriptional activity. Also interacts with PPARBP in vitro. Interacts with AKAP13, LPIN1, PRDM16 and coactivator NCOA6. Interacts with ASXL1 and ASXL2. Interacts with PER2. Interacts with SIRT1; the interaction seems to be modulated by NAD(+) levels. Interacts with CRY1 and CRY2. In hepatocytes, interacts with PAQR3 and HUWE1; the interactions promote PPARA poylubiquitination and HUWE1-mediated degradation. Ubiquitinated by E3 ubiquitin-protein ligase HUWE1; leading to proteasomal degradation. Post-translationally, phosphorylated.

The protein localises to the nucleus. In terms of biological role, ligand-activated transcription factor. Key regulator of lipid metabolism. Activated by the endogenous ligand 1-palmitoyl-2-oleoyl-sn-glycerol-3-phosphocholine (16:0/18:1-GPC). Activated by oleylethanolamide, a naturally occurring lipid that regulates satiety. Receptor for peroxisome proliferators such as hypolipidemic drugs and fatty acids. Regulates the peroxisomal beta-oxidation pathway of fatty acids. Functions as a transcription activator for the ACOX1 and P450 genes. Transactivation activity requires heterodimerization with RXRA and is antagonized by NR2C2. May be required for the propagation of clock information to metabolic pathways regulated by PER2. The sequence is that of Peroxisome proliferator-activated receptor alpha (PPARA) from Cavia porcellus (Guinea pig).